We begin with the raw amino-acid sequence, 455 residues long: Argininosuccinate lyase (455 aa).

This sequence belongs to the lyase 1 family. Argininosuccinate lyase subfamily.

Its subcellular location is the cytoplasm. The enzyme catalyses 2-(N(omega)-L-arginino)succinate = fumarate + L-arginine. It participates in amino-acid biosynthesis; L-arginine biosynthesis; L-arginine from L-ornithine and carbamoyl phosphate: step 3/3. The polypeptide is Argininosuccinate lyase (Caulobacter vibrioides (strain ATCC 19089 / CIP 103742 / CB 15) (Caulobacter crescentus)).